A 221-amino-acid polypeptide reads, in one-letter code: uncharacterized protein (221 aa).

The Peptidase S8 domain maps to 1–189 (MDSGKDTNGY…NVVYCSEKAV (189 aa)).

Belongs to the peptidase S8 family.

This is an uncharacterized protein from Aquifex aeolicus (strain VF5).